Reading from the N-terminus, the 542-residue chain is Chaperonin GroEL 3 (542 aa).

Residues 30–33 (TLGP), K51, 87–91 (DGTTT), G415, and D496 contribute to the ATP site.

Belongs to the chaperonin (HSP60) family. Forms a cylinder of 14 subunits composed of two heptameric rings stacked back-to-back. Interacts with the co-chaperonin GroES.

It is found in the cytoplasm. It catalyses the reaction ATP + H2O + a folded polypeptide = ADP + phosphate + an unfolded polypeptide.. Functionally, together with its co-chaperonin GroES, plays an essential role in assisting protein folding. The GroEL-GroES system forms a nano-cage that allows encapsulation of the non-native substrate proteins and provides a physical environment optimized to promote and accelerate protein folding. This is Chaperonin GroEL 3 from Rhizobium johnstonii (strain DSM 114642 / LMG 32736 / 3841) (Rhizobium leguminosarum bv. viciae).